Consider the following 581-residue polypeptide: Transmembrane anterior posterior transformation protein 1 homolog (581 aa).

The interval 1-72 is disordered; the sequence is MAGVSDAAAP…TLGFYESDRG (72 aa). Over residues 11 to 23 the composition is skewed to gly residues; that stretch reads GSGGEGRRGGGGS. Positions 46–55 are enriched in pro residues; sequence RPPPAGPGQP. Transmembrane regions (helical) follow at residues 125–145, 182–202, 250–270, 417–437, and 439–459; these read LMFF…TLLP, ILVI…YHLI, IGVI…AILI, GFIP…SIKV, and GVLA…LKVL. A disordered region spans residues 484–563; the sequence is PVPSASAGKP…DSSELKHRSS (80 aa). Composition is skewed to polar residues over residues 500–522 and 532–542; these read MFKS…NQPV and LVTSNSDQFLT. Residues 549–563 are compositionally biased toward basic and acidic residues; sequence KDISQDSSELKHRSS.

Belongs to the TAPT1 family.

The protein resides in the cytoplasm. The protein localises to the cytoskeleton. It is found in the microtubule organizing center. Its subcellular location is the centrosome. It localises to the cilium basal body. The protein resides in the membrane. Functionally, plays a role in primary cilia formation. May act as a downstream effector of HOXC8 during development. May be involved in cartilage and bone development. May play a role in the differentiation of cranial neural crest cells. This chain is Transmembrane anterior posterior transformation protein 1 homolog (TAPT1), found in Gallus gallus (Chicken).